The chain runs to 349 residues: 5-deoxyribose 1-phosphate isomerase (349 aa).

Residues 49 to 51 (RGA), Arg-92, and Gln-199 contribute to the substrate site. Asp-240 (proton donor) is an active-site residue. 250–251 (NK) provides a ligand contact to substrate.

It belongs to the EIF-2B alpha/beta/delta subunits family. DrdI subfamily.

It catalyses the reaction 5-deoxy-alpha-D-ribose 1-phosphate = 5-deoxy-D-ribulose 1-phosphate. The protein operates within carbohydrate degradation. Its function is as follows. Catalyzes the isomerization of 5-deoxy-alpha-D-ribose 1-phosphate to 5-deoxy-D-ribulose 1-phosphate, as part of a 5-deoxyribose salvage pathway that recycles this toxic radical SAM enzyme by-product to mainstream metabolites. This is 5-deoxyribose 1-phosphate isomerase from Clostridium botulinum (strain Langeland / NCTC 10281 / Type F).